Reading from the N-terminus, the 466-residue chain is MSYASVVDVLTGKVAVDETVTVRGWVRTRRDSKAGISFINLHDGSCFDAIQAVVPAELPNYSNEVQKLTTGCSVAITGVVVPSQGKGQSFELQATKVHVYGWVEDPDTYPMAPKRHSMEYLREYAHLRPRTNITGAVMRVRNALSQAIHRFFHEEGYLWVSTPIITTSDCEGAGEMFRVSTLDMLNIPKTDKGEVDYSEDFFGKEAFLTVSGQLNVESYACSLSKVYTFGPTFRAENSNTSRHLSEFWMVEPELAFATLDDVAGLAEAMLKYVFKAVLEERPDDMAFFAERINSDAISRLEAIVNNDFVHMDYTDAIEILKNCDRKFEYAVEWGVDLQSEHERYLAEEHVGAPIILKNYPRDIKAFYMRQNEDGKTVAAMDVLAPGIGEIIGGSAREERLDILDQRIDEMNLPKEEYGFYRDLRRYGTVPHAGFGLGFERLVAYVTGVQNIRDVIPFPRAPKSAEF.

It belongs to the class-II aminoacyl-tRNA synthetase family. Homodimer.

The protein resides in the cytoplasm. It catalyses the reaction tRNA(Asn) + L-asparagine + ATP = L-asparaginyl-tRNA(Asn) + AMP + diphosphate + H(+). This chain is Asparagine--tRNA ligase, found in Idiomarina loihiensis (strain ATCC BAA-735 / DSM 15497 / L2-TR).